Reading from the N-terminus, the 411-residue chain is Peptidase T (411 aa).

His-79 lines the Zn(2+) pocket. Asp-81 is a catalytic residue. Asp-142 is a Zn(2+) binding site. The active-site Proton acceptor is Glu-176. Positions 177, 199, and 381 each coordinate Zn(2+).

This sequence belongs to the peptidase M20B family. Zn(2+) serves as cofactor.

Its subcellular location is the cytoplasm. It catalyses the reaction Release of the N-terminal residue from a tripeptide.. Functionally, cleaves the N-terminal amino acid of tripeptides. This Exiguobacterium sibiricum (strain DSM 17290 / CCUG 55495 / CIP 109462 / JCM 13490 / 255-15) protein is Peptidase T.